The primary structure comprises 492 residues: MQVIETLADGLKRELKIVIPAADMKARLDERLVDAKDKVRINGFRPGKVPMGHLKKMYGKSIMADLVNELVREKPSEILSSRGEKSATQPAISMTEDEQEAEKILSAESDFEFTVAYEIIPAIELKANDGIKVTREVVEVSEDEINEQILKIAESARTYETKKGKAADGDRVTMNYLGKVDGVAFDGGTAEDAELVLGSGRFIPGFEDQLVGVKAGDEKTITVTFPADYPAANLAGKDATFDVTVKEVAAAAAVEINDELAEKLGLESAEKLKEIVKGQIESQFGNVTRQKVKRQILDQLDEMYKFDTPAGLVDAEFDNIWRQINTDLAQSGKTFADEDTTEEEAREEYRKLAERRVRLGLVLSEIGEKAGVEVTEEEMQRALFQQLQQFPGQQKEILDFFRNTPGASASLRAPIFEEKVIDKLLTEISVTDKTVSKEELLADDGEEETETKKKAPAKKKAAAKADDAAEGEEAAPKKKAPAKKKATEADAE.

The segment at 77–96 is disordered; that stretch reads EILSSRGEKSATQPAISMTE. Residues 169–254 form the PPIase FKBP-type domain; that stretch reads GDRVTMNYLG…VKEVAAAAAV (86 aa). Residues 439-492 are disordered; the sequence is ELLADDGEEETETKKKAPAKKKAAAKADDAAEGEEAAPKKKAPAKKKATEADAE.

The protein belongs to the FKBP-type PPIase family. Tig subfamily.

It localises to the cytoplasm. The catalysed reaction is [protein]-peptidylproline (omega=180) = [protein]-peptidylproline (omega=0). Involved in protein export. Acts as a chaperone by maintaining the newly synthesized protein in an open conformation. Functions as a peptidyl-prolyl cis-trans isomerase. In Agrobacterium fabrum (strain C58 / ATCC 33970) (Agrobacterium tumefaciens (strain C58)), this protein is Trigger factor.